Here is a 201-residue protein sequence, read N- to C-terminus: uncharacterized protein (201 aa).

Disordered regions lie at residues 46-80 (PLVN…SYDE) and 143-201 (SSTS…ANPA). Composition is skewed to polar residues over residues 64-78 (GSQN…SQSY) and 143-167 (SSTS…NSPA).

This is an uncharacterized protein from Legionella pneumophila.